A 127-amino-acid polypeptide reads, in one-letter code: Fluoride-specific ion channel FluC (127 aa).

The next 4 membrane-spanning stretches (helical) occupy residues Phe-4–Val-24, Tyr-38–Phe-58, Val-71–Val-91, and Leu-104–Leu-124. Na(+)-binding residues include Gly-78 and Thr-81.

This sequence belongs to the fluoride channel Fluc/FEX (TC 1.A.43) family.

The protein resides in the cell inner membrane. The catalysed reaction is fluoride(in) = fluoride(out). With respect to regulation, na(+) is not transported, but it plays an essential structural role and its presence is essential for fluoride channel function. Functionally, fluoride-specific ion channel. Important for reducing fluoride concentration in the cell, thus reducing its toxicity. The polypeptide is Fluoride-specific ion channel FluC (Vibrio parahaemolyticus serotype O3:K6 (strain RIMD 2210633)).